A 652-amino-acid chain; its full sequence is DNA ligase (652 aa).

Residues 29–33 (DAEYD), 78–79 (SL), and Glu-107 each bind NAD(+). Lys-109 functions as the N6-AMP-lysine intermediate in the catalytic mechanism. NAD(+) is bound by residues Arg-130, Glu-164, Lys-278, and Lys-302. Positions 395, 398, 413, and 418 each coordinate Zn(2+). Residues 577 to 652 (TDDAILSGKT…VKDEAWLLDL (76 aa)) enclose the BRCT domain.

The protein belongs to the NAD-dependent DNA ligase family. LigA subfamily. The cofactor is Mg(2+). Requires Mn(2+) as cofactor.

The enzyme catalyses NAD(+) + (deoxyribonucleotide)n-3'-hydroxyl + 5'-phospho-(deoxyribonucleotide)m = (deoxyribonucleotide)n+m + AMP + beta-nicotinamide D-nucleotide.. DNA ligase that catalyzes the formation of phosphodiester linkages between 5'-phosphoryl and 3'-hydroxyl groups in double-stranded DNA using NAD as a coenzyme and as the energy source for the reaction. It is essential for DNA replication and repair of damaged DNA. In Streptococcus thermophilus (strain ATCC BAA-491 / LMD-9), this protein is DNA ligase.